We begin with the raw amino-acid sequence, 512 residues long: Sodium/proline symporter (512 aa).

A run of 13 helical transmembrane segments spans residues 16–36 (WQTYIMIAVYFLILIVIGFYG), 54–74 (IGPYITALSAGASDMSGWMIM), 85–105 (LSAMWITIGLTLGAYINYFVV), 139–159 (IISGLIIVVFFTLYTHSGFVS), 174–194 (FGLILVAFIVIFYTFFGGYLA), 200–220 (FFQGVIMLIAMVMVPIVAMMN), 247–267 (IGIISLFSWGLGYFGQPHIII), 286–306 (ISWMAVGLLGAVAVGLTGIAF), 327–347 (VLFHPLVGGFLLAAILAAIMS), 381–401 (FVMIGRLSVLVVAIVAIAIAW), 410–430 (LVGNAWAGFGASFSPLVLFAL), 438–458 (AGAVSGMVSGALVVIVWIAWI), and 467–487 (IFGLYEIIPGFIVSVIVTYVV).

It belongs to the sodium:solute symporter (SSF) (TC 2.A.21) family.

Its subcellular location is the cell membrane. It carries out the reaction L-proline(in) + Na(+)(in) = L-proline(out) + Na(+)(out). Functionally, catalyzes the sodium-dependent uptake of extracellular L-proline. Since most S.aureus strains are L-proline auxotrophs, this transporter may aid the bacterial persistence during an infection of tissues with low proline concentrations. This chain is Sodium/proline symporter (putP), found in Staphylococcus aureus (strain USA300).